We begin with the raw amino-acid sequence, 276 residues long: Shikimate dehydrogenase (NADP(+)) (276 aa).

Shikimate-binding positions include 18 to 20 and T65; that span reads SKS. The active-site Proton acceptor is K69. Position 81 (E81) interacts with NADP(+). The shikimate site is built by N90 and D106. Residues 130–134, 154–159, and M217 each bind NADP(+); these read GAGGA and NRTSSK. Y219 serves as a coordination point for shikimate. G241 is an NADP(+) binding site.

It belongs to the shikimate dehydrogenase family. As to quaternary structure, homodimer.

The catalysed reaction is shikimate + NADP(+) = 3-dehydroshikimate + NADPH + H(+). It participates in metabolic intermediate biosynthesis; chorismate biosynthesis; chorismate from D-erythrose 4-phosphate and phosphoenolpyruvate: step 4/7. In terms of biological role, involved in the biosynthesis of the chorismate, which leads to the biosynthesis of aromatic amino acids. Catalyzes the reversible NADPH linked reduction of 3-dehydroshikimate (DHSA) to yield shikimate (SA). The sequence is that of Shikimate dehydrogenase (NADP(+)) from Vibrio atlanticus (strain LGP32) (Vibrio splendidus (strain Mel32)).